Reading from the N-terminus, the 319-residue chain is Taste receptor type 2 member 30 (319 aa).

Residue Met1 is a topological domain, extracellular. Residues 2 to 22 (ITFLPIIFSILIVVIFVVGNF) traverse the membrane as a helical segment. Over 23 to 46 (ANGFIALVNSIEWVKRQKISFVDQ) the chain is Cytoplasmic. Residues 47–67 (ILTALAVSRVGLLWVLLLHWY) form a helical membrane-spanning segment. Over 68–86 (ATQLNPAFYSVEVRITVYN) the chain is Extracellular. Residues 87–107 (VWAVTNHFSSWLATSLSMFYL) form a helical membrane-spanning segment. Residues 108–126 (LKIANFSNLIFLRIKRRVK) lie on the Cytoplasmic side of the membrane. A helical membrane pass occupies residues 127-147 (SVVLVILLGPLLFLVCHLFVI). Residues 148–178 (NMDETIWTKEYEGNMTWKIKLKSAMYHSNMT) are Extracellular-facing. Asn161 and Asn176 each carry an N-linked (GlcNAc...) asparagine glycan. Residues 179–199 (LTILANFVPLTLTLISFLLLI) traverse the membrane as a helical segment. Topologically, residues 200–229 (CSLCKHLKKMQLHGKGSQDPSTKVHIKALQ) are cytoplasmic. A helical membrane pass occupies residues 230-250 (TVTSFLLLCAIYFLSMIISVC). At 251–259 (NLGRLQKQP) the chain is on the extracellular side. The chain crosses the membrane as a helical span at residues 260-280 (VFMFCQAIIFSYPSTHPFILI). Over 281-319 (LGNKKLKQIFLSVLWHVRYWVKDRSLRLHRFTRAALCKG) the chain is Cytoplasmic.

Belongs to the G-protein coupled receptor T2R family.

The protein resides in the membrane. Its function is as follows. Receptor that may play a role in the perception of bitterness and is gustducin-linked. May play a role in sensing the chemical composition of the gastrointestinal content. The activity of this receptor may stimulate alpha gustducin, mediate PLC-beta-2 activation and lead to the gating of TRPM5. This chain is Taste receptor type 2 member 30 (TAS2R30), found in Pan paniscus (Pygmy chimpanzee).